The primary structure comprises 239 residues: Proteasome activator complex subunit 2 (239 aa).

An N-acetylalanine modification is found at Ala2. Residue Ser10 is modified to Phosphoserine. Residues 65–87 form a disordered region; it reads DIPIPDPPPKDDEMETDKQEKKE. Over residues 72-87 the composition is skewed to basic and acidic residues; it reads PPKDDEMETDKQEKKE.

It belongs to the PA28 family. As to quaternary structure, heterodimer of PSME1 and PSME2, which forms a hexameric ring.

Implicated in immunoproteasome assembly and required for efficient antigen processing. The PA28 activator complex enhances the generation of class I binding peptides by altering the cleavage pattern of the proteasome. This chain is Proteasome activator complex subunit 2 (Psme2), found in Mus musculus (Mouse).